Consider the following 537-residue polypeptide: Multidrug resistance protein Stp (537 aa).

A run of 14 helical transmembrane segments spans residues 6 to 26, 46 to 66, 77 to 97, 104 to 124, 136 to 156, 163 to 183, 200 to 220, 223 to 243, 262 to 282, 300 to 320, 327 to 347, 352 to 372, 397 to 417, and 478 to 498; these read LLTL…ALIV, WVVA…ATLA, IGVS…SIAV, AQGL…SAAF, IWTA…GLLV, SIFY…LCYV, LLFI…PQIG, SVQT…FVWL, YALA…MLLL, LMIL…GHLV, VPIL…IFSE, ALVL…LTPI, AIGS…WLSA, and VALL…WRWF.

Belongs to the major facilitator superfamily. EmrB family.

It is found in the cell membrane. In terms of biological role, contributes to spectinomycin and tetracycline resistance. The sequence is that of Multidrug resistance protein Stp (stp) from Mycobacterium tuberculosis (strain ATCC 25618 / H37Rv).